A 952-amino-acid polypeptide reads, in one-letter code: Meiosis-specific coiled-coil domain-containing protein MEIOC (952 aa).

Disordered regions lie at residues 1-23 (MEVR…EGLE), 609-629 (QAKP…LDGL), and 933-952 (VHES…TNKH). Residues 617–627 (YDPEEGPKHLD) are compositionally biased toward basic and acidic residues. Positions 936–952 (SINSSNPMNQRGETNKH) are enriched in polar residues.

Interacts with YTHDC2; binds transcript that regulate the mitotic cell cycle inhibiting progression into metaphase, thereby allowing meiotic prophase to proceed normally. Interacts with RBM46. As to expression, expressed in fetal ovaries. Expressed in testis.

It localises to the cytoplasm. Its subcellular location is the nucleus. Is required for meiosis completion in both male and female germ cells. Confers stability to numerous meiotic mRNAs in gonads allowing proper initiation and progression into meiosis prophase I. The function may involve YTHDC2 and is independent of induction by retinoic acid (RA). Maintains an extended meiotic prophase I by properly promoting the transition from a mitotic to a meiotic cell cycle program by binding transcripts through its interaction with YTHDC2 that regulate the mitotic cell cycle. The sequence is that of Meiosis-specific coiled-coil domain-containing protein MEIOC from Homo sapiens (Human).